The primary structure comprises 222 residues: Glutathione S-transferase A4 (222 aa).

At Met-1 the chain carries N-acetylmethionine. Residues 3–83 (AKPKLYYFNG…YLAAKYNLYG (81 aa)) form the GST N-terminal domain. Glutathione-binding positions include Tyr-9, 53-55 (GQV), and 66-68 (TQT). The GST C-terminal domain occupies 85-208 (DLKERVRIDM…QPGSQRKPPP (124 aa)).

This sequence belongs to the GST superfamily. Alpha family. As to quaternary structure, homodimer. In terms of processing, the N-terminus is blocked.

Its subcellular location is the cytoplasm. It catalyses the reaction RX + glutathione = an S-substituted glutathione + a halide anion + H(+). Functionally, conjugation of reduced glutathione to a wide number of exogenous and endogenous hydrophobic electrophiles. The chain is Glutathione S-transferase A4 (Gsta4) from Mus musculus (Mouse).